The chain runs to 188 residues: MNGVFLAIGALLPICLAGGALLGYAAVRFRVQGDPVAEQVNALLPQTQCGQCGYPGCKPYAEAIAAGDKINKCPPGGEATIRALADLLDLEPEPLDAAEETPPRVAYIREAECIGCTKCIQACPVDAIVGAARLMHTVIADECTGCDLCLEPCPVDCIEMREIPDDVRHWKWPQPSPRLIASDRERAA.

The segment at 1 to 26 (MNGVFLAIGALLPICLAGGALLGYAA) is hydrophobic. A 4Fe-4S domain is found at 32–90 (QGDPVAEQVNALLPQTQCGQCGYPGCKPYAEAIAAGDKINKCPPGGEATIRALADLLDL). The [4Fe-4S] cluster site is built by Cys49, Cys52, Cys57, Cys73, Cys113, Cys116, Cys119, Cys123, Cys143, Cys146, Cys149, and Cys153. 2 consecutive 4Fe-4S ferredoxin-type domains span residues 104–133 (RVAY…GAAR) and 134–163 (LMHT…MREI).

This sequence belongs to the 4Fe4S bacterial-type ferredoxin family. RnfB subfamily. In terms of assembly, the complex is composed of six subunits: RnfA, RnfB, RnfC, RnfD, RnfE and RnfG. It depends on [4Fe-4S] cluster as a cofactor.

It localises to the cell inner membrane. Its function is as follows. Part of a membrane-bound complex that couples electron transfer with translocation of ions across the membrane. This Pseudomonas aeruginosa (strain LESB58) protein is Ion-translocating oxidoreductase complex subunit B.